The sequence spans 148 residues: Putative nickel-responsive regulator (148 aa).

Residues H88, H99, H101, and C107 each coordinate Ni(2+).

This sequence belongs to the transcriptional regulatory CopG/NikR family. Homotetramer. Requires Ni(2+) as cofactor.

Its function is as follows. Transcriptional regulator. This chain is Putative nickel-responsive regulator, found in Helicobacter pylori (strain ATCC 700392 / 26695) (Campylobacter pylori).